A 786-amino-acid chain; its full sequence is Receptor-interacting serine/threonine-protein kinase 4 (786 aa).

The Protein kinase domain maps to phenylalanine 22–leucine 286. Residues valine 28–valine 36 and lysine 51 each bind ATP. A Glycyl lysine isopeptide (Lys-Gly) (interchain with G-Cter in ubiquitin) cross-link involves residue lysine 51. Aspartate 143 (proton acceptor) is an active-site residue. A Glycyl lysine isopeptide (Lys-Gly) (interchain with G-Cter in ubiquitin) cross-link involves residue lysine 145. 2 disordered regions span residues glutamate 293–phenylalanine 328 and glutamine 347–serine 378. The span at lysine 295–arginine 319 shows a compositional bias: basic and acidic residues. Low complexity predominate over residues arginine 357 to serine 378. 10 ANK repeats span residues serine 439–leucine 468, lysine 472–alanine 501, aspartate 505–glutamate 534, glutamate 538–leucine 567, aspartate 571–alanine 601, aspartate 605–isoleucine 634, glutamine 638–alanine 667, glutamate 671–alanine 700, leucine 704–aspartate 734, and glutamine 736–leucine 765.

This sequence belongs to the protein kinase superfamily. TKL Ser/Thr protein kinase family. As to quaternary structure, interacts with PRKCB. Interacts with TRAF1, TRAF2, TRAF3 and TRAF5. Interacts with BIRC2/c-IAP1, BIRC3/c-IAP2 and XIAP/BIRC4. Post-translationally, may be phosphorylated by MAP3K2 and MAP3K3. Proteolytically cleaved by during Fas-induced apoptosis. Cleavage at Asp-342 and Asp-380. In terms of processing, polyubiquitinated with 'Lys-48' and 'Lys-63'-linked chains by BIRC2/c-IAP1 and BIRC3/c-IAP2, leading to activation of NF-kappa-B. Expressed in the epidermis of the skin (at protein level). Ubiquitously expressed, with an abundant expression in the thymus, bone marrow, pro-B, pre-B and immature B cells and a weak expression in the spleen.

It localises to the cytoplasm. The protein resides in the membrane. It catalyses the reaction L-seryl-[protein] + ATP = O-phospho-L-seryl-[protein] + ADP + H(+). It carries out the reaction L-threonyl-[protein] + ATP = O-phospho-L-threonyl-[protein] + ADP + H(+). Serine/threonine protein kinase. Required for embryonic skin development and correct skin homeostasis in adults, via phosphorylation of PKP1 and subsequent promotion of keratinocyte differentiation and cell adhesion. It is a direct transcriptional target of TP63. Plays a role in NF-kappa-B activation. The sequence is that of Receptor-interacting serine/threonine-protein kinase 4 (Ripk4) from Mus musculus (Mouse).